Consider the following 96-residue polypeptide: Aspartyl/glutamyl-tRNA(Asn/Gln) amidotransferase subunit C (96 aa).

It belongs to the GatC family. Heterotrimer of A, B and C subunits.

It catalyses the reaction L-glutamyl-tRNA(Gln) + L-glutamine + ATP + H2O = L-glutaminyl-tRNA(Gln) + L-glutamate + ADP + phosphate + H(+). The catalysed reaction is L-aspartyl-tRNA(Asn) + L-glutamine + ATP + H2O = L-asparaginyl-tRNA(Asn) + L-glutamate + ADP + phosphate + 2 H(+). Functionally, allows the formation of correctly charged Asn-tRNA(Asn) or Gln-tRNA(Gln) through the transamidation of misacylated Asp-tRNA(Asn) or Glu-tRNA(Gln) in organisms which lack either or both of asparaginyl-tRNA or glutaminyl-tRNA synthetases. The reaction takes place in the presence of glutamine and ATP through an activated phospho-Asp-tRNA(Asn) or phospho-Glu-tRNA(Gln). In Herpetosiphon aurantiacus (strain ATCC 23779 / DSM 785 / 114-95), this protein is Aspartyl/glutamyl-tRNA(Asn/Gln) amidotransferase subunit C.